Consider the following 135-residue polypeptide: MAIYGIGTDIVQVSRVAAVMQRTNGRFAEKVLGPDELRVYHARHARSQARGLAFLATRFSVKEAFSKAIGLGMRWPMTWRALQTLNEPSGRPTCVASGELADWLAERGITSRVTLSDERDYAVSFVIAETPDTAD.

Mg(2+) is bound by residues aspartate 9 and glutamate 63.

Belongs to the P-Pant transferase superfamily. AcpS family. The cofactor is Mg(2+).

It localises to the cytoplasm. It catalyses the reaction apo-[ACP] + CoA = holo-[ACP] + adenosine 3',5'-bisphosphate + H(+). Functionally, transfers the 4'-phosphopantetheine moiety from coenzyme A to a Ser of acyl-carrier-protein. The sequence is that of Holo-[acyl-carrier-protein] synthase from Paraburkholderia phymatum (strain DSM 17167 / CIP 108236 / LMG 21445 / STM815) (Burkholderia phymatum).